The following is a 270-amino-acid chain: Bark lectin (270 aa).

An N-terminal signal peptide occupies residues 1–15 (ISITFFLLLLNKVNS). Residues asparagine 60, asparagine 76, and asparagine 127 are each glycosylated (N-linked (GlcNAc...) asparagine). Glutamate 141 and aspartate 143 together coordinate Mn(2+). Aspartate 143, histidine 145, asparagine 147, and aspartate 150 together coordinate Ca(2+). Mn(2+) is bound by residues aspartate 150 and histidine 155. N-linked (GlcNAc...) asparagine glycosylation occurs at asparagine 201.

It belongs to the leguminous lectin family.

Functionally, galNAc-specific lectin. In Styphnolobium japonicum (Japanese pagoda tree), this protein is Bark lectin.